A 1137-amino-acid chain; its full sequence is Guanine nucleotide exchange factor DBS (1137 aa).

Residues 52 to 224 form the CRAL-TRIO domain; sequence TAMATDEIMH…DLGGTLDYCH (173 aa). A Spectrin repeat occupies 351-456; sequence LQLRHFEQGF…IARRRGLLSK (106 aa). Phosphoserine is present on residues Ser-457 and Ser-480. The stretch at 503-529 forms a coiled coil; sequence LETGAENKIQELNAIYKEYESILNQDL. The tract at residues 557–625 is disordered; the sequence is LAARQTRPVQ…QGRGSAGEEE (69 aa). The segment covering 584–597 has biased composition (low complexity); sequence GIRRGSENSSSEGG. The segment covering 607 to 616 has biased composition (basic and acidic residues); sequence AKSEMSESRQ. Ser-620 carries the phosphoserine modification. The DH domain occupies 631 to 811; that stretch reads LRRHVMSELL…LGILKAVNDS (181 aa). The PH domain maps to 829–945; sequence KLLMQGSFSV…WVNEIRKVLT (117 aa). 2 disordered regions span residues 955 to 1058 and 1116 to 1137; these read SQHR…LVPG and GPSG…RAHP. Positions 962–977 are enriched in low complexity; it reads QSQSLPLPAPTSTSPS. Phosphoserine is present on residues Ser-1033, Ser-1034, Ser-1041, and Ser-1042. An SH3 domain is found at 1055-1116; sequence LVPGKYTVVA…PASSLSVRLG (62 aa). Polar residues predominate over residues 1119-1128; it reads GSAQCLSSSG.

Belongs to the MCF2 family. Interacts with GTP-bound RAC1. Interacts with CDC42. Interacts with RHOA. Interacts with CCPG1, which results in specific inhibition of its exchange activity toward RHOA, but does not affect its activity on CDC42.

It localises to the cytoplasm. It is found in the cell membrane. Its subcellular location is the endomembrane system. Guanine nucleotide exchange factor that catalyzes guanine nucleotide exchange on RHOA and CDC42, and thereby contributes to the regulation of RHOA and CDC42 signaling pathways. Seems to lack activity with RAC1. Becomes activated and highly tumorigenic by truncation of the N-terminus. Isoform 5 activates CDC42. Its function is as follows. Does not catalyze guanine nucleotide exchange on CDC42. The sequence is that of Guanine nucleotide exchange factor DBS (MCF2L) from Homo sapiens (Human).